Consider the following 739-residue polypeptide: MFTGKLQIKVCEASGLRPTDFQKRHNLTFGKLADEQLIDPYVSIDVDESHFDRATTRPKTFDPVWNEQFVHDVTNVSNINLTVFHDAALPPDDFVANCIISFEDLMQSETAVQDLWVNLEPQGKIHVIIELKNRTDKAKAEAVVEHTVAVNKEFKERAGFNRRRGAMRRRVHQVNGHKFMATFLRQPTFCSHCREFIWGIGKQGYQCQVCTLVVHKKCHLSVVSKCPGMRDEQPAKVEMVPAGQRFNVNLPHRFVVHSYKRFTFCDHCGSLLYGLIKQGLQCETCGMNVHKRCQKNVANTCGINTKQMAEILSSLGISPDKQQPRRSKYLNQQGGEDNYGASLGADGDGAPGQSFRSCALSVDSLATSTTTMTSGYNSSSCMSLAVTGSGGVGATGETRPGKCSLLDFNFIKVLGKGSFGKVMLAEKKGTDEIYAIKVLKKDAIIQDDDVDCTMTEKRILALAANHPFLTALHSCFQTPDRLFFVMEYVNGGDLMFQIQKARRFEASRAAFYAAEVTLALQFLHTHGVIYRDLKLDNILLDQEGHCKLADFGMCKEGIMNGMLTTTFCGTPDYIAPEILKEQEYGASVDWWALGVLMYEMMAGQPPFEADNEDELFDSIMHDDVLYPVWLSREAVSILKGFLTKNPEQRLGCTGDENEIRKHPFFAKLDWKELEKRNIKPPFRPKMKNPRDANNFDAEFTKEDPVLTPIGNEVVRCINQDEFAGFSFVNPKFGPERKVY.

A C2 domain is found at 1–117 (MFTGKLQIKV…SETAVQDLWV (117 aa)). 2 Phorbol-ester/DAG-type zinc fingers span residues 176-226 (GHKF…VSKC) and 251-301 (PHRF…ANTC). In terms of domain architecture, Protein kinase spans 408–665 (FNFIKVLGKG…ENEIRKHPFF (258 aa)). ATP contacts are provided by residues 414–422 (LGKGSFGKV) and lysine 437. Aspartate 532 serves as the catalytic Proton acceptor. The 72-residue stretch at 666 to 737 (AKLDWKELEK…VNPKFGPERK (72 aa)) folds into the AGC-kinase C-terminal domain.

This sequence belongs to the protein kinase superfamily. AGC Ser/Thr protein kinase family. PKC subfamily.

The enzyme catalyses L-seryl-[protein] + ATP = O-phospho-L-seryl-[protein] + ADP + H(+). The catalysed reaction is L-threonyl-[protein] + ATP = O-phospho-L-threonyl-[protein] + ADP + H(+). In terms of biological role, PKC is activated by diacylglycerol which in turn phosphorylates a range of cellular proteins. PKC also serves as the receptor for phorbol esters, a class of tumor promoters. This is Protein kinase C (Pkc98E) from Drosophila melanogaster (Fruit fly).